A 93-amino-acid chain; its full sequence is Putative septation protein SpoVG (93 aa).

The protein belongs to the SpoVG family.

Functionally, could be involved in septation. This chain is Putative septation protein SpoVG, found in Lachnoclostridium phytofermentans (strain ATCC 700394 / DSM 18823 / ISDg) (Clostridium phytofermentans).